A 164-amino-acid polypeptide reads, in one-letter code: Phosphopantetheine adenylyltransferase (164 aa).

A substrate-binding site is contributed by serine 9. Residues 9–10 (SF) and histidine 17 each bind ATP. Substrate-binding residues include lysine 41, leucine 73, and arginine 87. ATP is bound by residues 88–90 (GLR), glutamate 98, and 123–129 (YTFLSSS).

It belongs to the bacterial CoaD family. In terms of assembly, homohexamer. Mg(2+) serves as cofactor.

The protein localises to the cytoplasm. The enzyme catalyses (R)-4'-phosphopantetheine + ATP + H(+) = 3'-dephospho-CoA + diphosphate. It functions in the pathway cofactor biosynthesis; coenzyme A biosynthesis; CoA from (R)-pantothenate: step 4/5. Functionally, reversibly transfers an adenylyl group from ATP to 4'-phosphopantetheine, yielding dephospho-CoA (dPCoA) and pyrophosphate. This is Phosphopantetheine adenylyltransferase from Dictyoglomus thermophilum (strain ATCC 35947 / DSM 3960 / H-6-12).